The chain runs to 632 residues: Fem-3 mRNA-binding factor 2 (632 aa).

Residues 1–11 (MDQSKMRRTNQ) are compositionally biased toward basic residues. The tract at residues 1–37 (MDQSKMRRTNQFRKTSQKPPSTGIDSYPTPAQSPMAQ) is disordered. Residues 12-35 (FRKTSQKPPSTGIDSYPTPAQSPM) show a composition bias toward polar residues. Residues 162–566 (TRSNNVLPTW…KMIETLANLR (405 aa)) form the PUM-HD domain. Pumilio repeat units lie at residues 187 to 225 (EVLD…QLFE), 226 to 264 (QVIG…GYTK), 271 to 307 (NFIS…KLVQ), 308 to 332 (ALPR…QKVV), 345 to 384 (DFVA…DLTS), 400 to 436 (SVTN…CIIE), 438 to 473 (CLMR…EMMD), and 484 to 521 (DTGK…RQTK). The interval 609 to 632 (MLEPRSNKSSVSVKFSSSGSHGDD) is disordered. A compositionally biased stretch (low complexity) spans 615 to 632 (NKSSVSVKFSSSGSHGDD).

Interacts (via C-terminus) with gld-3 isoform A in an RNA-independent manner. Interacts with dlc-1, and is required for the localization of fbf-2 to P granules. Interacts (via RNA-binding domain) with lst-1, probably displaces bound auto-inhibitory C-terminal tail and alters its RNA-binding affinity. As to expression, expressed specifically in the germline (at protein level).

It localises to the cytoplasm. Its subcellular location is the cytoplasmic granule. In terms of biological role, RNA-binding protein that binds to the consensus sequence 5'-UGUGCCAUA-3' in mRNA 3'-UTRs. Involved in the control of stem cells and sex determination in the C.elegans hermaphrodite germline. May also play a role in the hermaphrodite germline proliferation and oogenesis. By binding to the 3'-UTR, represses phosphatase lip-1 expression in the distal part of the germline mitotic zone. Binds specifically to the regulatory region of fem-3 3'-UTR and mediates the sperm/oocyte switch. Negatively regulates gld-3 expression possibly by directly binding to two sites within the gld-3 isoform b 3'-UTR. Suppresses germline tumor formation by preventing the dedifferentiation of secondary spermatocytes. C-terminal disordered region probably auto-inhibits RNA binding; auto-inhibition may be reversed by interaction with lst-1. In Caenorhabditis elegans, this protein is Fem-3 mRNA-binding factor 2.